We begin with the raw amino-acid sequence, 139 residues long: Acidic phospholipase A2 4 (139 aa).

Residues 1–16 form the signal peptide; sequence MRTLWIVAVWLVGVEG. 7 cysteine pairs are disulfide-bonded: cysteine 42/cysteine 131, cysteine 44/cysteine 60, cysteine 59/cysteine 111, cysteine 65/cysteine 139, cysteine 66/cysteine 104, cysteine 73/cysteine 97, and cysteine 91/cysteine 102. The Ca(2+) site is built by tyrosine 43, glycine 45, and glycine 47. Residue histidine 63 is part of the active site. Position 64 (aspartate 64) interacts with Ca(2+). Aspartate 105 is a catalytic residue.

This sequence belongs to the phospholipase A2 family. Group II subfamily. D49 sub-subfamily. Ca(2+) is required as a cofactor. Expressed by the venom gland.

It localises to the secreted. It carries out the reaction a 1,2-diacyl-sn-glycero-3-phosphocholine + H2O = a 1-acyl-sn-glycero-3-phosphocholine + a fatty acid + H(+). PLA2 catalyzes the calcium-dependent hydrolysis of the 2-acyl groups in 3-sn-phosphoglycerides. This chain is Acidic phospholipase A2 4, found in Echis carinatus sochureki (Saw-scaled viper).